The chain runs to 247 residues: Cytochrome c oxidase subunit 2 (247 aa).

At 1-38 the chain is on the mitochondrial intermembrane side; the sequence is MREMMMNNMLNDVPTPWAMYFQDSATPNMEGMMELHNN. Residues 39–55 traverse the membrane as a helical segment; it reads VLFYLCVMLGFVTYMLY. The Mitochondrial matrix portion of the chain corresponds to 56–86; it reads NVMTVYNKSAMAYKYMNHGQFMEMMWTTFPA. Residues 87-103 form a helical membrane-spanning segment; it reads MMLLMMAFPSFMLLYMC. Residues 104–247 lie on the Mitochondrial intermembrane side of the membrane; the sequence is DEVMAPAMTI…VDFLAWIDEQ (144 aa). The Cu cation site is built by His182, Cys217, Glu219, Cys221, His225, and Met228. Glu219 serves as a coordination point for Mg(2+).

Belongs to the cytochrome c oxidase subunit 2 family. As to quaternary structure, component of the cytochrome c oxidase (complex IV, CIV), a multisubunit enzyme composed of a catalytic core of 3 subunits and several supernumerary subunits. The complex exists as a monomer or a dimer and forms supercomplexes (SCs) in the inner mitochondrial membrane with ubiquinol-cytochrome c oxidoreductase (cytochrome b-c1 complex, complex III, CIII). Cu cation serves as cofactor.

It is found in the mitochondrion inner membrane. It catalyses the reaction 4 Fe(II)-[cytochrome c] + O2 + 8 H(+)(in) = 4 Fe(III)-[cytochrome c] + 2 H2O + 4 H(+)(out). In terms of biological role, component of the cytochrome c oxidase, the last enzyme in the mitochondrial electron transport chain which drives oxidative phosphorylation. The respiratory chain contains 3 multisubunit complexes succinate dehydrogenase (complex II, CII), ubiquinol-cytochrome c oxidoreductase (cytochrome b-c1 complex, complex III, CIII) and cytochrome c oxidase (complex IV, CIV), that cooperate to transfer electrons derived from NADH and succinate to molecular oxygen, creating an electrochemical gradient over the inner membrane that drives transmembrane transport and the ATP synthase. Cytochrome c oxidase is the component of the respiratory chain that catalyzes the reduction of oxygen to water. Electrons originating from reduced cytochrome c in the intermembrane space (IMS) are transferred via the dinuclear copper A center (CU(A)) of subunit 2 and heme A of subunit 1 to the active site in subunit 1, a binuclear center (BNC) formed by heme A3 and copper B (CU(B)). The BNC reduces molecular oxygen to 2 water molecules using 4 electrons from cytochrome c in the IMS and 4 protons from the mitochondrial matrix. The protein is Cytochrome c oxidase subunit 2 (COX2) of Eeniella nana (Yeast).